A 2069-amino-acid chain; its full sequence is Dedicator of cytokinesis protein 9 (2069 aa).

A phosphoserine mark is found at Ser21, Ser32, Ser167, and Ser170. The PH domain occupies Gly174–Gln281. Residues Glu290 to Asp313 are disordered. 2 positions are modified to phosphoserine: Ser433 and Ser443. A C2 DOCK-type domain is found at Thr640–Val818. Phosphoserine occurs at positions 927 and 1235. Thr1241 carries the phosphothreonine modification. The tract at residues Thr1241 to Ser1282 is disordered. Phosphoserine occurs at positions 1255, 1261, and 1264. Positions Ser1255–Glu1267 are enriched in polar residues. A compositionally biased stretch (basic and acidic residues) spans Arg1268 to Gln1280. The DOCKER domain maps to Lys1605–Gly2069. The segment at Asp1693 to Gly2069 is interaction with CDC42. Coiled-coil stretches lie at residues Ile1948 to Gly1982 and Asn2034 to Gln2067.

This sequence belongs to the DOCK family. Homodimer. Interacts preferentially with nucleotide-depleted CDC42. In terms of tissue distribution, widely expressed, with highest expression in heart and placenta. Expressed at intermediate level in kidney, brain, lung and skeletal muscle.

The protein resides in the endomembrane system. Its function is as follows. Guanine nucleotide-exchange factor (GEF) that activates CDC42 by exchanging bound GDP for free GTP. Overexpression induces filopodia formation. This Homo sapiens (Human) protein is Dedicator of cytokinesis protein 9.